Reading from the N-terminus, the 290-residue chain is ATP synthase gamma chain (290 aa).

The protein belongs to the ATPase gamma chain family. As to quaternary structure, F-type ATPases have 2 components, CF(1) - the catalytic core - and CF(0) - the membrane proton channel. CF(1) has five subunits: alpha(3), beta(3), gamma(1), delta(1), epsilon(1). CF(0) has three main subunits: a, b and c.

It localises to the cell inner membrane. In terms of biological role, produces ATP from ADP in the presence of a proton gradient across the membrane. The gamma chain is believed to be important in regulating ATPase activity and the flow of protons through the CF(0) complex. The polypeptide is ATP synthase gamma chain (Delftia acidovorans (strain DSM 14801 / SPH-1)).